Reading from the N-terminus, the 209-residue chain is PRA1 family protein A1 (209 aa).

4 consecutive transmembrane segments (helical) span residues 51-73, 77-99, 144-164, and 166-186; these read LYYY…VLTR, IFAA…GSFS, VFVL…SGLL, and VSVA…LRTP.

The protein belongs to the PRA1 family.

The protein localises to the endoplasmic reticulum membrane. Its function is as follows. May be involved in both secretory and endocytic intracellular trafficking in the endosomal/prevacuolar compartments. In Arabidopsis thaliana (Mouse-ear cress), this protein is PRA1 family protein A1 (PRA1A1).